We begin with the raw amino-acid sequence, 200 residues long: Holliday junction branch migration complex subunit RuvA (200 aa).

The interval 1-65 (MYEYIKGTLT…ETEHVLYGFS (65 aa)) is domain I. Positions 66-144 (SRAERECFRL…TLMPLYLEEP (79 aa)) are domain II. Positions 145 to 149 (VVPSS) are flexible linker. Positions 150–200 (TANSSFKEGIGALMNLGFSRLAADRMMTEAVKELSEEASVAELLPIALRKS) are domain III.

Belongs to the RuvA family. Homotetramer. Forms an RuvA(8)-RuvB(12)-Holliday junction (HJ) complex. HJ DNA is sandwiched between 2 RuvA tetramers; dsDNA enters through RuvA and exits via RuvB. An RuvB hexamer assembles on each DNA strand where it exits the tetramer. Each RuvB hexamer is contacted by two RuvA subunits (via domain III) on 2 adjacent RuvB subunits; this complex drives branch migration. In the full resolvosome a probable DNA-RuvA(4)-RuvB(12)-RuvC(2) complex forms which resolves the HJ.

Its subcellular location is the cytoplasm. Its function is as follows. The RuvA-RuvB-RuvC complex processes Holliday junction (HJ) DNA during genetic recombination and DNA repair, while the RuvA-RuvB complex plays an important role in the rescue of blocked DNA replication forks via replication fork reversal (RFR). RuvA specifically binds to HJ cruciform DNA, conferring on it an open structure. The RuvB hexamer acts as an ATP-dependent pump, pulling dsDNA into and through the RuvAB complex. HJ branch migration allows RuvC to scan DNA until it finds its consensus sequence, where it cleaves and resolves the cruciform DNA. In Chlamydia trachomatis serovar L2 (strain ATCC VR-902B / DSM 19102 / 434/Bu), this protein is Holliday junction branch migration complex subunit RuvA.